The chain runs to 360 residues: Histidinol-phosphate aminotransferase (360 aa).

Residue lysine 219 is modified to N6-(pyridoxal phosphate)lysine.

Belongs to the class-II pyridoxal-phosphate-dependent aminotransferase family. Histidinol-phosphate aminotransferase subfamily. In terms of assembly, homodimer. Requires pyridoxal 5'-phosphate as cofactor.

The enzyme catalyses L-histidinol phosphate + 2-oxoglutarate = 3-(imidazol-4-yl)-2-oxopropyl phosphate + L-glutamate. It participates in amino-acid biosynthesis; L-histidine biosynthesis; L-histidine from 5-phospho-alpha-D-ribose 1-diphosphate: step 7/9. In Jannaschia sp. (strain CCS1), this protein is Histidinol-phosphate aminotransferase.